A 183-amino-acid chain; its full sequence is MLILASSSISRANLLKTAKIDFRQVSFDYDENLDKNISPFLYVQKIVLEKERQFLSTLGKDFQNQNLLFADSIVCIDEKILTKAKDKKEAYEMLALQNGKYASILSAFLLVKPEKRVFSLSKTTLYFKNFDENALRDYVENDLYKGKAGCIMCEGFHQNFITHQVGNLSTALGLDIQTLKAYL.

The Proton acceptor role is filled by Asp-71.

This sequence belongs to the Maf family. Requires a divalent metal cation as cofactor.

The protein resides in the cytoplasm. The enzyme catalyses a ribonucleoside 5'-triphosphate + H2O = a ribonucleoside 5'-phosphate + diphosphate + H(+). The catalysed reaction is a 2'-deoxyribonucleoside 5'-triphosphate + H2O = a 2'-deoxyribonucleoside 5'-phosphate + diphosphate + H(+). In terms of biological role, nucleoside triphosphate pyrophosphatase. May have a dual role in cell division arrest and in preventing the incorporation of modified nucleotides into cellular nucleic acids. This chain is Nucleoside triphosphate pyrophosphatase, found in Campylobacter jejuni subsp. jejuni serotype O:6 (strain 81116 / NCTC 11828).